The following is a 217-amino-acid chain: MTLFSSLLSRVSKDGKESIRGNYKPKKHPRGSSRHTMRKSLKKNLAGGTVLKESVKCPDGEDENEWIAVNTIEIFNTMNMCYSFIQGFCTEASCPQMTGAKATYLWTDGKGKPQELSAPQYIDNLVNWISEQIDNPEIFPVDDSDFPKNYRPAVIKIISRVLRVYAHIYHAHWDHIQKLDCYQHTNTSLKHLQYFAEHFSLIGEKDLAVMKHVFDTL.

The disordered stretch occupies residues 15-38; it reads GKESIRGNYKPKKHPRGSSRHTMR. Positions 23-38 are enriched in basic residues; sequence YKPKKHPRGSSRHTMR. C89, C94, H167, and H172 together coordinate Zn(2+).

The protein belongs to the MOB1/phocein family.

The sequence is that of MOB kinase activator-like 2 (mob2) from Dictyostelium discoideum (Social amoeba).